Reading from the N-terminus, the 355-residue chain is Vacuolar protein sorting-associated protein 37C (355 aa).

At S29 the chain carries Phosphoserine. A VPS37 C-terminal domain is found at 78–167 (VERCQEQKAK…RKPRASQELA (90 aa)). Residues 159–355 (KPRASQELAG…PPPGPAWPGY (197 aa)) are disordered. Pro residues-rich tracts occupy residues 170 to 186 (APPPRPPPPVRPVPQGT) and 194 to 205 (PQPPSAMPPYPL). Residues 246-257 (PAAQPGPRGAAG) show a composition bias toward low complexity. Residues 321–355 (PGQPQPSVPLQPPYPPGPAPPYGFPPPPGPAWPGY) are compositionally biased toward pro residues.

The protein belongs to the VPS37 family. Component of the ESCRT-I complex (endosomal sorting complex required for transport I) which consists of TSG101, VPS28, a VPS37 protein (VPS37A to -D) and MVB12A or MVB12B in a 1:1:1:1 stoichiometry. Interacts with TSG101, VPS28, MVB12A and MVB12B. Component of the ESCRT-I complex (endosomal sorting complex required for transport I) which consists of TSG101, VPS28, a VPS37 protein (VPS37A to -D) and UBAP1 in a 1:1:1:1 stoichiometry. Interacts with HGS and STAM2. Interacts with CEP55. In terms of processing, phosphorylated by TBK1.

It is found in the late endosome membrane. Functionally, component of the ESCRT-I complex, a regulator of vesicular trafficking process. Required for the sorting of endocytic ubiquitinated cargos into multivesicular bodies. May be involved in cell growth and differentiation. This chain is Vacuolar protein sorting-associated protein 37C (VPS37C), found in Pongo abelii (Sumatran orangutan).